The sequence spans 86 residues: Protein Tat (86 aa).

A disordered region spans residues 1-21; the sequence is MDPVDPNIEPWNHPGSQPKTA. The interaction with human CREBBP stretch occupies residues 1–24; sequence MDPVDPNIEPWNHPGSQPKTACNR. Positions 1–48 are transactivation; sequence MDPVDPNIEPWNHPGSQPKTACNRCHCKKCCYHCQVCFITKGLGISYG. Residues C22, C25, and C27 each coordinate Zn(2+). The segment at 22 to 37 is cysteine-rich; that stretch reads CNRCHCKKCCYHCQVC. K28 carries the post-translational modification N6-acetyllysine; by host PCAF. Zn(2+) contacts are provided by C30, H33, C34, and C37. The segment at 38–48 is core; sequence FITKGLGISYG. Residues 47–86 form a disordered region; it reads YGRKKRRQRRRPSQGGQTHQDPIPKQPSSQPRGDPTGPKE. Positions 48-58 are enriched in basic residues; that stretch reads GRKKRRQRRRP. Positions 49–57 match the Nuclear localization signal, RNA-binding (TAR), and protein transduction motif; the sequence is RKKRRQRRR. The interval 49–86 is interaction with the host capping enzyme RNGTT; sequence RKKRRQRRRPSQGGQTHQDPIPKQPSSQPRGDPTGPKE. N6-acetyllysine; by host EP300 and GCN5L2 occurs at positions 50 and 51. R52 and R53 each carry asymmetric dimethylarginine; by host PRMT6. Residues 60 to 77 are compositionally biased toward polar residues; that stretch reads QGGQTHQDPIPKQPSSQP. Residue K71 forms a Glycyl lysine isopeptide (Lys-Gly) (interchain with G-Cter in ubiquitin) linkage. Residues 78–80 carry the Cell attachment site motif; sequence RGD.

It belongs to the lentiviruses Tat family. As to quaternary structure, interacts with host CCNT1. Associates with the P-TEFb complex composed at least of Tat, P-TEFb (CDK9 and CCNT1), TAR RNA, RNA Pol II. Recruits the HATs CREBBP, TAF1/TFIID, EP300, PCAF and GCN5L2. Interacts with host KAT5/Tip60; this interaction targets the latter to degradation. Interacts with the host deacetylase SIRT1. Interacts with host capping enzyme RNGTT; this interaction stimulates RNGTT. Binds to host KDR, and to the host integrins ITGAV/ITGB3 and ITGA5/ITGB1. Interacts with host KPNB1/importin beta-1 without previous binding to KPNA1/importin alpha-1. Interacts with EIF2AK2. Interacts with host nucleosome assembly protein NAP1L1; this interaction may be required for the transport of Tat within the nucleus, since the two proteins interact at the nuclear rim. Interacts with host C1QBP/SF2P32; this interaction involves lysine-acetylated Tat. Interacts with the host chemokine receptors CCR2, CCR3 and CXCR4. Interacts with host DPP4/CD26; this interaction may trigger an anti-proliferative effect. Interacts with host LDLR. Interacts with the host extracellular matrix metalloproteinase MMP1. Interacts with host PRMT6; this interaction mediates Tat's methylation. Interacts with, and is ubiquitinated by MDM2/Hdm2. Interacts with host PSMC3 and HTATIP2. Interacts with STAB1; this interaction may overcome SATB1-mediated repression of IL2 and IL2RA (interleukin) in T cells by binding to the same domain than HDAC1. Interacts (when acetylated) with human CDK13, thereby increasing HIV-1 mRNA splicing and promoting the production of the doubly spliced HIV-1 protein Nef. Interacts with host TBP; this interaction modulates the activity of transcriptional pre-initiation complex. Interacts with host RELA. Interacts with host PLSCR1; this interaction negatively regulates Tat transactivation activity by altering its subcellular distribution. In terms of processing, asymmetrical arginine methylation by host PRMT6 seems to diminish the transactivation capacity of Tat and affects the interaction with host CCNT1. Post-translationally, acetylation by EP300, CREBBP, GCN5L2/GCN5 and PCAF regulates the transactivation activity of Tat. EP300-mediated acetylation of Lys-50 promotes dissociation of Tat from the TAR RNA through the competitive binding to PCAF's bromodomain. In addition, the non-acetylated Tat's N-terminus can also interact with PCAF. PCAF-mediated acetylation of Lys-28 enhances Tat's binding to CCNT1. Lys-50 is deacetylated by SIRT1. Polyubiquitination by host MDM2 does not target Tat to degradation, but activates its transactivation function and fosters interaction with CCNT1 and TAR RNA. In terms of processing, phosphorylated by EIF2AK2 on serine and threonine residues adjacent to the basic region important for TAR RNA binding and function. Phosphorylation of Tat by EIF2AK2 is dependent on the prior activation of EIF2AK2 by dsRNA.

The protein resides in the host nucleus. It is found in the host nucleolus. Its subcellular location is the host cytoplasm. The protein localises to the secreted. Transcriptional activator that increases RNA Pol II processivity, thereby increasing the level of full-length viral transcripts. Recognizes a hairpin structure at the 5'-LTR of the nascent viral mRNAs referred to as the transactivation responsive RNA element (TAR) and recruits the cyclin T1-CDK9 complex (P-TEFb complex) that will in turn hyperphosphorylate the RNA polymerase II to allow efficient elongation. The CDK9 component of P-TEFb and other Tat-activated kinases hyperphosphorylate the C-terminus of RNA Pol II that becomes stabilized and much more processive. Other factors such as HTATSF1/Tat-SF1, SUPT5H/SPT5, and HTATIP2 are also important for Tat's function. Besides its effect on RNA Pol II processivity, Tat induces chromatin remodeling of proviral genes by recruiting the histone acetyltransferases (HATs) CREBBP, EP300 and PCAF to the chromatin. This also contributes to the increase in proviral transcription rate, especially when the provirus integrates in transcriptionally silent region of the host genome. To ensure maximal activation of the LTR, Tat mediates nuclear translocation of NF-kappa-B by interacting with host RELA. Through its interaction with host TBP, Tat may also modulate transcription initiation. Tat can reactivate a latently infected cell by penetrating in it and transactivating its LTR promoter. In the cytoplasm, Tat is thought to act as a translational activator of HIV-1 mRNAs. In terms of biological role, extracellular circulating Tat can be endocytosed by surrounding uninfected cells via the binding to several surface receptors such as CD26, CXCR4, heparan sulfate proteoglycans (HSPG) or LDLR. Neurons are rarely infected, but they internalize Tat via their LDLR. Through its interaction with nuclear HATs, Tat is potentially able to control the acetylation-dependent cellular gene expression. Modulates the expression of many cellular genes involved in cell survival, proliferation or in coding for cytokines or cytokine receptors. Tat plays a role in T-cell and neurons apoptosis. Tat induced neurotoxicity and apoptosis probably contribute to neuroAIDS. Circulating Tat also acts as a chemokine-like and/or growth factor-like molecule that binds to specific receptors on the surface of the cells, affecting many cellular pathways. In the vascular system, Tat binds to ITGAV/ITGB3 and ITGA5/ITGB1 integrins dimers at the surface of endothelial cells and competes with bFGF for heparin-binding sites, leading to an excess of soluble bFGF. The polypeptide is Protein Tat (Human immunodeficiency virus type 1 group M subtype D (isolate Z2/CDC-Z34) (HIV-1)).